The following is an 89-amino-acid chain: Small ribosomal subunit protein bS20 (89 aa).

Belongs to the bacterial ribosomal protein bS20 family.

Binds directly to 16S ribosomal RNA. This is Small ribosomal subunit protein bS20 from Xanthobacter autotrophicus (strain ATCC BAA-1158 / Py2).